The following is an 888-amino-acid chain: Alanine--tRNA ligase (888 aa).

Zn(2+) contacts are provided by His-564, His-568, Cys-676, and His-680.

Belongs to the class-II aminoacyl-tRNA synthetase family. Zn(2+) serves as cofactor.

Its subcellular location is the cytoplasm. It catalyses the reaction tRNA(Ala) + L-alanine + ATP = L-alanyl-tRNA(Ala) + AMP + diphosphate. Catalyzes the attachment of alanine to tRNA(Ala) in a two-step reaction: alanine is first activated by ATP to form Ala-AMP and then transferred to the acceptor end of tRNA(Ala). Also edits incorrectly charged Ser-tRNA(Ala) and Gly-tRNA(Ala) via its editing domain. The protein is Alanine--tRNA ligase of Bartonella tribocorum (strain CIP 105476 / IBS 506).